Consider the following 94-residue polypeptide: Pyrimidine/purine nucleoside phosphorylase (94 aa).

Belongs to the nucleoside phosphorylase PpnP family.

It catalyses the reaction a purine D-ribonucleoside + phosphate = a purine nucleobase + alpha-D-ribose 1-phosphate. It carries out the reaction adenosine + phosphate = alpha-D-ribose 1-phosphate + adenine. The enzyme catalyses cytidine + phosphate = cytosine + alpha-D-ribose 1-phosphate. The catalysed reaction is guanosine + phosphate = alpha-D-ribose 1-phosphate + guanine. It catalyses the reaction inosine + phosphate = alpha-D-ribose 1-phosphate + hypoxanthine. It carries out the reaction thymidine + phosphate = 2-deoxy-alpha-D-ribose 1-phosphate + thymine. The enzyme catalyses uridine + phosphate = alpha-D-ribose 1-phosphate + uracil. The catalysed reaction is xanthosine + phosphate = alpha-D-ribose 1-phosphate + xanthine. Its function is as follows. Catalyzes the phosphorolysis of diverse nucleosides, yielding D-ribose 1-phosphate and the respective free bases. Can use uridine, adenosine, guanosine, cytidine, thymidine, inosine and xanthosine as substrates. Also catalyzes the reverse reactions. The sequence is that of Pyrimidine/purine nucleoside phosphorylase from Cronobacter sakazakii (strain ATCC BAA-894) (Enterobacter sakazakii).